The sequence spans 127 residues: Fluoride-specific ion channel FluC (127 aa).

Helical transmembrane passes span 1–21 (MMSY…RHMV), 32–52 (EFPF…GAVV), 71–91 (TGIL…VLLY), and 96–116 (VFLA…ALLL). The Na(+) site is built by glycine 75 and threonine 78.

Belongs to the fluoride channel Fluc/FEX (TC 1.A.43) family.

It localises to the cell inner membrane. It carries out the reaction fluoride(in) = fluoride(out). With respect to regulation, na(+) is not transported, but it plays an essential structural role and its presence is essential for fluoride channel function. Fluoride-specific ion channel. Important for reducing fluoride concentration in the cell, thus reducing its toxicity. The chain is Fluoride-specific ion channel FluC from Granulibacter bethesdensis (strain ATCC BAA-1260 / CGDNIH1).